We begin with the raw amino-acid sequence, 720 residues long: Secreted RxLR effector protein 138 (720 aa).

Positions 1–20 (MRSAFYVAIVLLVAAGSQTA) are cleaved as a signal peptide. The short motif at 56 to 71 (RNLKDDFMFSAGDEER) is the RxLR-dEER element. The interval 264–335 (ESNTRKRNNV…VAPPEPSRLD (72 aa)) is disordered. The span at 320 to 335 (KQHDHRVAPPEPSRLD) shows a compositional bias: basic and acidic residues. An N-linked (GlcNAc...) asparagine glycan is attached at N609.

It belongs to the RxLR effector family.

It localises to the secreted. Its subcellular location is the host nucleus. In terms of biological role, secreted effector that acts as an elicitor that induces cell death in host plant cells. The sequence is that of Secreted RxLR effector protein 138 from Plasmopara viticola (Downy mildew of grapevine).